Consider the following 179-residue polypeptide: Large ribosomal subunit protein uL5 (179 aa).

It belongs to the universal ribosomal protein uL5 family. As to quaternary structure, part of the 50S ribosomal subunit; part of the 5S rRNA/L5/L18/L25 subcomplex. Contacts the 5S rRNA and the P site tRNA. Forms a bridge to the 30S subunit in the 70S ribosome.

In terms of biological role, this is one of the proteins that bind and probably mediate the attachment of the 5S RNA into the large ribosomal subunit, where it forms part of the central protuberance. In the 70S ribosome it contacts protein S13 of the 30S subunit (bridge B1b), connecting the 2 subunits; this bridge is implicated in subunit movement. Contacts the P site tRNA; the 5S rRNA and some of its associated proteins might help stabilize positioning of ribosome-bound tRNAs. In Sodalis glossinidius (strain morsitans), this protein is Large ribosomal subunit protein uL5.